A 493-amino-acid polypeptide reads, in one-letter code: Putative lon protease homolog (493 aa).

52–59 (GPPGVGKS) provides a ligand contact to ATP.

It belongs to the peptidase S16 family.

The protein is Putative lon protease homolog of Thermoplasma acidophilum (strain ATCC 25905 / DSM 1728 / JCM 9062 / NBRC 15155 / AMRC-C165).